Reading from the N-terminus, the 404-residue chain is MKKIYDLWVRVSLIKKIGIGVVIGVMLGILAPDLTGFSILGKLFVGGLKAIAPLLVFALVSQAISHQKKGKQTNMTLIIVLYLFGTFASALVAVLTAYLFPLTLVLNTPVNTELSPPQGVAEVFQSLLLKLVDNPINALATANYIGVLSWAIIFGLALKAASQETKHLIKTAAEVTSQIVVWIINLAPIGIMSLVFTTISENGVGILSDYAFLILVLVGTMVFVALVVNPLIAVLITRQNPYPLVLRCLRESGLTAFFTRSSAANIPVNMQLCQKIGLSKDTYSVSIPLGATINMGGAAITINVLTLAAVHTFGIPIDFLTALLLSVVAAVSACGASGVAGGSLLLIPVACSLFGISNDLAMQVVGVGFIVGVIQDSCETALNSSTDVLFTAIAENAFWKRKKA.

The next 8 helical transmembrane spans lie at 17–37, 39–59, 75–95, 138–158, 179–199, 212–232, 287–307, and 313–333; these read IGIG…LTGF, ILGK…VFAL, MTLI…VAVL, ALAT…GLAL, IVVW…FTTI, FLIL…NPLI, IPLG…VLTL, and FGIP…AVSA.

The protein belongs to the dicarboxylate/amino acid:cation symporter (DAACS) (TC 2.A.23) family.

The protein resides in the cell membrane. It carries out the reaction L-serine(in) + Na(+)(in) = L-serine(out) + Na(+)(out). The enzyme catalyses L-threonine(in) + Na(+)(in) = L-threonine(out) + Na(+)(out). Its function is as follows. Involved in the import of serine and threonine into the cell, with the concomitant import of sodium (symport system). This Streptococcus pyogenes serotype M12 (strain MGAS2096) protein is Serine/threonine transporter SstT.